The chain runs to 361 residues: Phospho-N-acetylmuramoyl-pentapeptide-transferase (361 aa).

10 helical membrane passes run 28–48, 73–93, 98–118, 132–152, 168–188, 199–219, 235–255, 263–283, 288–308, and 338–358; these read LAIL…IRWL, TMGG…WGNL, MWIM…DDYL, YKLF…YFNP, WLID…VGSS, GLAA…LYIS, GTGE…GFLW, VFMG…LAVI, IVLA…ILQV, and KVIV…LLTL.

This sequence belongs to the glycosyltransferase 4 family. MraY subfamily. Requires Mg(2+) as cofactor.

The protein localises to the cell inner membrane. It catalyses the reaction UDP-N-acetyl-alpha-D-muramoyl-L-alanyl-gamma-D-glutamyl-meso-2,6-diaminopimeloyl-D-alanyl-D-alanine + di-trans,octa-cis-undecaprenyl phosphate = di-trans,octa-cis-undecaprenyl diphospho-N-acetyl-alpha-D-muramoyl-L-alanyl-D-glutamyl-meso-2,6-diaminopimeloyl-D-alanyl-D-alanine + UMP. Its pathway is cell wall biogenesis; peptidoglycan biosynthesis. Functionally, catalyzes the initial step of the lipid cycle reactions in the biosynthesis of the cell wall peptidoglycan: transfers peptidoglycan precursor phospho-MurNAc-pentapeptide from UDP-MurNAc-pentapeptide onto the lipid carrier undecaprenyl phosphate, yielding undecaprenyl-pyrophosphoryl-MurNAc-pentapeptide, known as lipid I. The polypeptide is Phospho-N-acetylmuramoyl-pentapeptide-transferase (Thermodesulfovibrio yellowstonii (strain ATCC 51303 / DSM 11347 / YP87)).